The primary structure comprises 378 residues: UDP-N-acetylglucosamine--N-acetylmuramyl-(pentapeptide) pyrophosphoryl-undecaprenol N-acetylglucosamine transferase (378 aa).

Residues 14–16 (TGG), Asn-125, Arg-165, Ser-193, and Gln-293 each bind UDP-N-acetyl-alpha-D-glucosamine.

It belongs to the glycosyltransferase 28 family. MurG subfamily.

The protein localises to the cell inner membrane. The catalysed reaction is di-trans,octa-cis-undecaprenyl diphospho-N-acetyl-alpha-D-muramoyl-L-alanyl-D-glutamyl-meso-2,6-diaminopimeloyl-D-alanyl-D-alanine + UDP-N-acetyl-alpha-D-glucosamine = di-trans,octa-cis-undecaprenyl diphospho-[N-acetyl-alpha-D-glucosaminyl-(1-&gt;4)]-N-acetyl-alpha-D-muramoyl-L-alanyl-D-glutamyl-meso-2,6-diaminopimeloyl-D-alanyl-D-alanine + UDP + H(+). It participates in cell wall biogenesis; peptidoglycan biosynthesis. In terms of biological role, cell wall formation. Catalyzes the transfer of a GlcNAc subunit on undecaprenyl-pyrophosphoryl-MurNAc-pentapeptide (lipid intermediate I) to form undecaprenyl-pyrophosphoryl-MurNAc-(pentapeptide)GlcNAc (lipid intermediate II). The polypeptide is UDP-N-acetylglucosamine--N-acetylmuramyl-(pentapeptide) pyrophosphoryl-undecaprenol N-acetylglucosamine transferase (Bartonella quintana (strain Toulouse) (Rochalimaea quintana)).